The chain runs to 382 residues: Lipid-A-disaccharide synthase (382 aa).

Belongs to the LpxB family.

The enzyme catalyses 2-N,3-O-bis[(3R)-3-hydroxytetradecanoyl]-alpha-D-glucosaminyl 1-phosphate + UDP-2-N,3-O-bis[(3R)-3-hydroxytetradecanoyl]-alpha-D-glucosamine = lipid A disaccharide (E. coli) + UDP + H(+). The catalysed reaction is a lipid X + a UDP-2-N,3-O-bis[(3R)-3-hydroxyacyl]-alpha-D-glucosamine = a lipid A disaccharide + UDP + H(+). Its pathway is glycolipid biosynthesis; lipid IV(A) biosynthesis; lipid IV(A) from (3R)-3-hydroxytetradecanoyl-[acyl-carrier-protein] and UDP-N-acetyl-alpha-D-glucosamine: step 5/6. Its function is as follows. Condensation of UDP-2,3-diacylglucosamine and 2,3-diacylglucosamine-1-phosphate to form lipid A disaccharide, a precursor of lipid A, a phosphorylated glycolipid that anchors the lipopolysaccharide to the outer membrane of the cell. The chain is Lipid-A-disaccharide synthase from Shigella dysenteriae serotype 1 (strain Sd197).